Reading from the N-terminus, the 175-residue chain is Large ribosomal subunit protein uL10 (175 aa).

This sequence belongs to the universal ribosomal protein uL10 family. In terms of assembly, part of the ribosomal stalk of the 50S ribosomal subunit. The N-terminus interacts with L11 and the large rRNA to form the base of the stalk. The C-terminus forms an elongated spine to which L12 dimers bind in a sequential fashion forming a multimeric L10(L12)X complex.

Its function is as follows. Forms part of the ribosomal stalk, playing a central role in the interaction of the ribosome with GTP-bound translation factors. The polypeptide is Large ribosomal subunit protein uL10 (Prochlorococcus marinus subsp. pastoris (strain CCMP1986 / NIES-2087 / MED4)).